We begin with the raw amino-acid sequence, 380 residues long: Calreticulin-3 (380 aa).

Positions 1 to 19 (MVSARALLWAICVLRVALA) are cleaved as a signal peptide. The N-domain stretch occupies residues 20-197 (TVYFQEEFLD…GQSIESGSIE (178 aa)). A glycan (N-linked (GlcNAc...) asparagine) is linked at Asn-42. 4 residues coordinate an alpha-D-glucoside: Tyr-109, Lys-111, Tyr-128, and Asp-135. Cys-137 and Cys-163 form a disulfide bridge. A run of 7 repeats spans residues 191 to 202 (IESGSIEYDWNL), 209 to 220 (EKTSLDSRDWDQ), 222 to 231 (EGSKVQDWEK), 235 to 246 (DAGASKPSDWNS), 250 to 256 (GDWLQKP), 260 to 268 (DGLKAEGID), and 270 to 280 (DVWLHQKMRPA). Residues 191-246 (IESGSIEYDWNLTSLRKTEKTSLDSRDWDQVEGSKVQDWEKHFLDAGASKPSDWNS) form a 4 X approximate repeats region. The P-domain stretch occupies residues 198–291 (YDWNLTSLRK…YLTQYDLSEF (94 aa)). Residue Asn-201 is glycosylated (N-linked (GlcNAc...) asparagine). Residues 250 to 280 (GDWLQKPPYEDGLKAEGIDKDVWLHQKMRPA) are 3 X approximate repeats. The tract at residues 292–380 (ENIGAIGLEL…FSRFHRQGEL (89 aa)) is C-domain. Glu-300 provides a ligand contact to an alpha-D-glucoside. The short motif at 377–380 (QGEL) is the Prevents secretion from ER element.

It belongs to the calreticulin family. As to quaternary structure, component of an EIF2 complex at least composed of CELF1/CUGBP1, CALR, CALR3, EIF2S1, EIF2S2, HSP90B1 and HSPA5. As to expression, testis specific, absent in mature sperm.

The protein resides in the endoplasmic reticulum lumen. CALR3 capacity for calcium-binding may be absent or much lower than that of CALR. During spermatogenesis, may act as a lectin-independent chaperone for specific client proteins such as ADAM3. Required for sperm fertility. This Mus musculus (Mouse) protein is Calreticulin-3 (Calr3).